The chain runs to 562 residues: Arf-GAP domain and FG repeat-containing protein 1 (562 aa).

In terms of domain architecture, Arf-GAP spans 11-135 (EKHLKMLRDM…WYVPPEQAKV (125 aa)). The C4-type zinc finger occupies 29 to 52 (CFDCDQRGPTYVNMTVGSFVCTSC). Positions 145 to 193 (GSSASSTSSTPEVKPLKSLLGDSAPTLHLNKGTPSQSPVVGRSQGQQQE) are disordered. Ser-167 is subject to Phosphoserine. Positions 176–191 (GTPSQSPVVGRSQGQQ) are enriched in polar residues. Thr-177 carries the phosphothreonine modification. A phosphoserine mark is found at Ser-181 and Ser-362. The O-linked (GlcNAc) serine glycan is linked to Ser-367.

Interacts with EPS15R and EPS15. Interacts with FCHO1. O-glycosylated. As to expression, ubiquitously expressed.

The protein localises to the nucleus. The protein resides in the cytoplasmic vesicle. Functionally, required for vesicle docking or fusion during acrosome biogenesis. May play a role in RNA trafficking or localization. In case of infection by HIV-1, acts as a cofactor for viral Rev and promotes movement of Rev-responsive element-containing RNAs from the nuclear periphery to the cytoplasm. This step is essential for HIV-1 replication. The chain is Arf-GAP domain and FG repeat-containing protein 1 (AGFG1) from Homo sapiens (Human).